Consider the following 387-residue polypeptide: Ferrochelatase (387 aa).

Positions 196 and 277 each coordinate Fe cation.

It belongs to the ferrochelatase family.

Its subcellular location is the cytoplasm. It catalyses the reaction heme b + 2 H(+) = protoporphyrin IX + Fe(2+). Its pathway is porphyrin-containing compound metabolism; protoheme biosynthesis; protoheme from protoporphyrin-IX: step 1/1. Its function is as follows. Catalyzes the ferrous insertion into protoporphyrin IX. The protein is Ferrochelatase of Rippkaea orientalis (strain PCC 8801 / RF-1) (Cyanothece sp. (strain PCC 8801)).